An 87-amino-acid chain; its full sequence is uncharacterized protein (87 aa).

This is an uncharacterized protein from Methanocaldococcus jannaschii (strain ATCC 43067 / DSM 2661 / JAL-1 / JCM 10045 / NBRC 100440) (Methanococcus jannaschii).